Consider the following 505-residue polypeptide: GMP synthase [glutamine-hydrolyzing] (505 aa).

The region spanning 2–190 is the Glutamine amidotransferase type-1 domain; it reads SVVILDFGSQ…FLEICGVARD (189 aa). The active-site Nucleophile is the C79. Residues H165 and E167 contribute to the active site. A GMPS ATP-PPase domain is found at 191-380; that stretch reads WNAEHIVDEL…LGLPDAIRMR (190 aa). 218–224 is an ATP binding site; it reads SGGVDSS.

In terms of assembly, homodimer.

It catalyses the reaction XMP + L-glutamine + ATP + H2O = GMP + L-glutamate + AMP + diphosphate + 2 H(+). The protein operates within purine metabolism; GMP biosynthesis; GMP from XMP (L-Gln route): step 1/1. Functionally, catalyzes the synthesis of GMP from XMP. The polypeptide is GMP synthase [glutamine-hydrolyzing] (Deinococcus geothermalis (strain DSM 11300 / CIP 105573 / AG-3a)).